Here is a 513-residue protein sequence, read N- to C-terminus: GMP synthase [glutamine-hydrolyzing] (513 aa).

The region spanning 7 to 197 (TILVLDFGGQ…LFGVCGCTGE (191 aa)) is the Glutamine amidotransferase type-1 domain. Catalysis depends on Cys-84, which acts as the Nucleophile. Residues His-171 and Glu-173 contribute to the active site. The GMPS ATP-PPase domain occupies 198-387 (WTMENFIEEQ…LGLPEDIVWR (190 aa)). An ATP-binding site is contributed by 225–231 (SGGVDSS).

Homodimer.

The catalysed reaction is XMP + L-glutamine + ATP + H2O = GMP + L-glutamate + AMP + diphosphate + 2 H(+). The protein operates within purine metabolism; GMP biosynthesis; GMP from XMP (L-Gln route): step 1/1. Functionally, catalyzes the synthesis of GMP from XMP. This Heliobacterium modesticaldum (strain ATCC 51547 / Ice1) protein is GMP synthase [glutamine-hydrolyzing].